The chain runs to 84 residues: MALLRLFSGRKASAPVARERLQILLAHDRGLCGQPNLLGLLREEILAVVSRHVQLDPEKVVVRMDRGKSVSTLAVDIELPNGLA.

This sequence belongs to the MinE family.

In terms of biological role, prevents the cell division inhibition by proteins MinC and MinD at internal division sites while permitting inhibition at polar sites. This ensures cell division at the proper site by restricting the formation of a division septum at the midpoint of the long axis of the cell. In Rhodopseudomonas palustris (strain BisA53), this protein is Cell division topological specificity factor.